Reading from the N-terminus, the 201-residue chain is Ras-related protein Rab-9A (201 aa).

Ala2 is subject to N-acetylalanine. GTP is bound by residues Gly17, Val18, Gly19, Lys20, Ser21, Ser22, Asp33, Ser34, His38, and Thr39. Ser21 is a binding site for Mg(2+). A Switch 1 motif is present at residues 31–42 (KFDSQLFHTIGV). The residue at position 34 (Ser34) is a Phosphoserine. Positions 39 and 62 each coordinate Mg(2+). The short motif at 64–78 (AGQERFRSLRTPFYR) is the Switch 2 element. Positions 65, 124, 125, 127, 155, and 156 each coordinate GTP. Residue Ser179 is modified to Phosphoserine. Thr187 carries the phosphothreonine modification. Residues Cys200 and Cys201 are each lipidated (S-geranylgeranyl cysteine).

Belongs to the small GTPase superfamily. Rab family. Interacts (preferentially in its GTP-bound form) with GCC2 (via its GRIP domain). Interacts (GTP-bound form) with SGSM1; the GDP-bound form has much lower affinity for SGSM1. Interacts with SGSM2. The GTP-bound form but not the GDP-bound form interacts with HPS4. The GTP-bound form but not the GDP-bound form interacts with BLOC-3 complex (heterodimer of HPS1 and HPS4) but does not interact with HPS1 alone. Interacts (GTP-bound form) with NDE1; two RAB9A-GTP molecules lie on the opposite sides of the NDE1 homodimer; the interaction leads to RAB9A-dynein motor tethering. Interacts (GTP-bound form) with NDEL1. Requires Mg(2+) as cofactor.

It is found in the cell membrane. The protein localises to the endoplasmic reticulum membrane. Its subcellular location is the golgi apparatus membrane. It localises to the late endosome. The protein resides in the cytoplasmic vesicle. It is found in the phagosome membrane. The protein localises to the phagosome. Its subcellular location is the cytoplasmic vesicle membrane. It localises to the melanosome. It carries out the reaction GTP + H2O = GDP + phosphate + H(+). With respect to regulation, regulated by guanine nucleotide exchange factors (GEFs) which promote the exchange of bound GDP for free GTP. Regulated by GTPase activating proteins (GAPs) which increase the GTP hydrolysis activity. Inhibited by GDP dissociation inhibitors (GDIs). In terms of biological role, the small GTPases Rab are key regulators of intracellular membrane trafficking, from the formation of transport vesicles to their fusion with membranes. Rabs cycle between an inactive GDP-bound form and an active GTP-bound form that is able to recruit to membranes different sets of downstream effectors directly responsible for vesicle formation, movement, tethering and fusion. RAB9A is involved in the transport of proteins between the endosomes and the trans-Golgi network (TGN). Specifically uses NDE1/NDEL1 as an effector to interact with the dynein motor complex in order to control retrograde trafficking of RAB9-associated late endosomes to the TGN. Involved in the recruitment of SGSM2 to melanosomes and is required for the proper trafficking of melanogenic enzymes TYR, TYRP1 and DCT/TYRP2 to melanosomes in melanocytes. This is Ras-related protein Rab-9A from Mus musculus (Mouse).